The chain runs to 503 residues: TGF-beta receptor type-1 (503 aa).

The N-terminal stretch at Met1–Ala29 is a signal peptide. The Extracellular segment spans residues Leu30–Leu126. Intrachain disulfides connect Cys32–Cys50, Cys34–Cys37, Cys44–Cys67, Cys82–Cys96, and Cys97–Cys102. An N-linked (GlcNAc...) asparagine glycan is attached at Asn41. A helical membrane pass occupies residues Ala127–Ile147. Residues Cys148–Met503 lie on the Cytoplasmic side of the membrane. Ser165 carries the post-translational modification Phosphoserine. A GS domain is found at Thr175–Thr204. Phosphothreonine; by TGFBR2 occurs at positions 185 and 186. Phosphoserine; by TGFBR2 occurs at positions 187, 189, and 191. Residues Leu193 to Pro194 carry the FKBP1A-binding motif. The Protein kinase domain maps to Ile205–Leu495. ATP contacts are provided by residues Ile211–Val219 and Lys232. A Glycyl lysine isopeptide (Lys-Gly) (interchain with G-Cter in ubiquitin) cross-link involves residue Lys268. Asp333 serves as the catalytic Proton acceptor. Lys391 is covalently cross-linked (Glycyl lysine isopeptide (Lys-Gly) (interchain with G-Cter in SUMO)).

The protein belongs to the protein kinase superfamily. TKL Ser/Thr protein kinase family. TGFB receptor subfamily. As to quaternary structure, homodimer; in the endoplasmic reticulum but also at the cell membrane. Heterohexamer; TGFB1, TGFB2 and TGFB3 homodimeric ligands assemble a functional receptor composed of two TGFBR1 and TGFBR2 heterodimers to form a ligand-receptor heterohexamer. The respective affinity of TGBRB1 and TGFBR2 for the ligands may modulate the kinetics of assembly of the receptor and may explain the different biological activities of TGFB1, TGFB2 and TGFB3. Component of a complex composed of TSC22D1 (via N-terminus), TGFBR1 and TGFBR2; the interaction between TSC22D1 and TGFBR1 is inhibited by SMAD7 and promoted by TGFB1. Interacts with CD109; inhibits TGF-beta receptor activation in keratinocytes. Interacts with RBPMS. Interacts (unphosphorylated) with FKBP1A; prevents TGFBR1 phosphorylation by TGFBR2 and stabilizes it in the inactive conformation. Interacts with SMAD2, SMAD3 and ZFYVE9; ZFYVE9 recruits SMAD2 and SMAD3 to the TGF-beta receptor. Interacts with TRAF6 and MAP3K7; induces MAP3K7 activation by TRAF6. Interacts with PARD6A; involved in TGF-beta induced epithelial to mesenchymal transition. Interacts with NEDD4L. Interacts with SMAD7, SMURF1 and SMURF2; SMAD7 recruits NEDD4L, SMURF1 and SMURF2 to the TGF-beta receptor. Interacts with USP15 and VPS39. Interacts with SDCBP (via C-terminus). Interacts with CAV1 and this interaction is impaired in the presence of SDCBP. Interacts with APPL1; interaction is TGF beta dependent; mediates trafficking of the TGFBR1 from the endosomes to the nucleus via microtubules in a TRAF6-dependent manner. Interacts with GPR50; this interaction promotes the constitutive activation of SMAD signaling pathway. Mg(2+) is required as a cofactor. The cofactor is Mn(2+). Phosphorylated at basal levels in the absence of ligand. Activated upon phosphorylation by TGFBR2, mainly in the GS domain. Phosphorylation in the GS domain abrogates FKBP1A-binding. In terms of processing, N-Glycosylated. Post-translationally, ubiquitinated; undergoes ubiquitination catalyzed by several E3 ubiquitin ligases including SMURF1, SMURF2 and NEDD4L2. Results in the proteasomal and/or lysosomal degradation of the receptor thereby negatively regulating its activity. Deubiquitinated by USP15, leading to stabilization of the protein and enhanced TGF-beta signal. Its ubiquitination and proteasome-mediated degradation is negatively regulated by SDCBP. Ubiquitinated by BFAR via'Lys-63'-linked ubiquitination at Lys-268, leading to TGF-beta signaling activation.

Its subcellular location is the cell membrane. The protein resides in the cell junction. It is found in the tight junction. It localises to the membrane raft. The protein localises to the cell surface. The enzyme catalyses L-threonyl-[receptor-protein] + ATP = O-phospho-L-threonyl-[receptor-protein] + ADP + H(+). It carries out the reaction L-seryl-[receptor-protein] + ATP = O-phospho-L-seryl-[receptor-protein] + ADP + H(+). Its activity is regulated as follows. Kept in an inactive conformation by FKBP1A preventing receptor activation in absence of ligand. CD109 is another inhibitor of the receptor. Its function is as follows. Transmembrane serine/threonine kinase forming with the TGF-beta type II serine/threonine kinase receptor, TGFBR2, the non-promiscuous receptor for the TGF-beta cytokines TGFB1, TGFB2 and TGFB3. Transduces the TGFB1, TGFB2 and TGFB3 signal from the cell surface to the cytoplasm and is thus regulating a plethora of physiological and pathological processes including cell cycle arrest in epithelial and hematopoietic cells, control of mesenchymal cell proliferation and differentiation, wound healing, extracellular matrix production, immunosuppression and carcinogenesis. The formation of the receptor complex composed of 2 TGFBR1 and 2 TGFBR2 molecules symmetrically bound to the cytokine dimer results in the phosphorylation and the activation of TGFBR1 by the constitutively active TGFBR2. Activated TGFBR1 phosphorylates SMAD2 which dissociates from the receptor and interacts with SMAD4. The SMAD2-SMAD4 complex is subsequently translocated to the nucleus where it modulates the transcription of the TGF-beta-regulated genes. This constitutes the canonical SMAD-dependent TGF-beta signaling cascade. Also involved in non-canonical, SMAD-independent TGF-beta signaling pathways. For instance, TGFBR1 induces TRAF6 autoubiquitination which in turn results in MAP3K7 ubiquitination and activation to trigger apoptosis. Also regulates epithelial to mesenchymal transition through a SMAD-independent signaling pathway through PARD6A phosphorylation and activation. The sequence is that of TGF-beta receptor type-1 (Tgfbr1) from Mus musculus (Mouse).